We begin with the raw amino-acid sequence, 239 residues long: Phosphoribosylaminoimidazole-succinocarboxamide synthase (239 aa).

This sequence belongs to the SAICAR synthetase family.

The catalysed reaction is 5-amino-1-(5-phospho-D-ribosyl)imidazole-4-carboxylate + L-aspartate + ATP = (2S)-2-[5-amino-1-(5-phospho-beta-D-ribosyl)imidazole-4-carboxamido]succinate + ADP + phosphate + 2 H(+). It participates in purine metabolism; IMP biosynthesis via de novo pathway; 5-amino-1-(5-phospho-D-ribosyl)imidazole-4-carboxamide from 5-amino-1-(5-phospho-D-ribosyl)imidazole-4-carboxylate: step 1/2. This chain is Phosphoribosylaminoimidazole-succinocarboxamide synthase, found in Bacillus cereus (strain B4264).